The sequence spans 423 residues: Growth hormone-releasing hormone receptor (423 aa).

A signal peptide spans 1-22; the sequence is MDSGVWAACIFCLLSSLPVALG. Over 23–130 the chain is Extracellular; it reads HVHPECDFIT…DEKSYFSTVR (108 aa). 3 disulfide bridges follow: C41–C64, C55–C96, and C78–C112. An N-linked (GlcNAc...) asparagine glycan is attached at N50. The chain crosses the membrane as a helical span at residues 131–151; it reads IVYTTGHSVSAVALFVAIAIL. Residues 152–167 are Cytoplasmic-facing; the sequence is VALRRLHCPRNYIHSQ. A helical transmembrane segment spans residues 168-188; sequence LFATFILKAGAVFLKDAALFH. Topologically, residues 189 to 210 are extracellular; that stretch reads SENTDHCSFSTVLCKVSVATSH. A helical membrane pass occupies residues 211–231; sequence FATMTNFSWLLAEAVYLTCLL. Residues 232–240 lie on the Cytoplasmic side of the membrane; it reads ASTSPSTRR. A helical membrane pass occupies residues 241-261; the sequence is AFWWLVLAGWGLPLLFTGTWV. The Extracellular segment spans residues 262-283; the sequence is GCKLAFEDVACWDLDDSSPYWW. The chain crosses the membrane as a helical span at residues 284–304; sequence IIKGPIVLSVGVNFGLFLNII. Residues 305–331 lie on the Cytoplasmic side of the membrane; the sequence is RILLRKLEPAQGSLHTQPQYWRLSKST. Residues 332-352 form a helical membrane-spanning segment; sequence LLLIPLFGIHYVIFNFLPDSA. Residues 353-357 lie on the Extracellular side of the membrane; the sequence is GLGIR. A helical membrane pass occupies residues 358-378; that stretch reads LPLELGLGSFQGFIVAILYCF. Over 379–423 the chain is Cytoplasmic; it reads LNQEVRTEISRRWHGHDPELLPAWRTHAKWAKPSRSRAKVLTTVC.

This sequence belongs to the G-protein coupled receptor 2 family. In terms of tissue distribution, pituitary gland. Also detected in the lymphocytes and thymocytes.

The protein localises to the cell membrane. Functionally, receptor for GRF, coupled to G proteins which activate adenylyl cyclase. Stimulates somatotroph cell growth, growth hormone gene transcription and growth hormone secretion. The chain is Growth hormone-releasing hormone receptor (GHRHR) from Sus scrofa (Pig).